Here is a 177-residue protein sequence, read N- to C-terminus: Adenine phosphoribosyltransferase (177 aa).

The protein belongs to the purine/pyrimidine phosphoribosyltransferase family. Homodimer.

Its subcellular location is the cytoplasm. The catalysed reaction is AMP + diphosphate = 5-phospho-alpha-D-ribose 1-diphosphate + adenine. It functions in the pathway purine metabolism; AMP biosynthesis via salvage pathway; AMP from adenine: step 1/1. Functionally, catalyzes a salvage reaction resulting in the formation of AMP, that is energically less costly than de novo synthesis. The polypeptide is Adenine phosphoribosyltransferase (Synechococcus sp. (strain RCC307)).